Consider the following 182-residue polypeptide: UPF0690 protein C1orf52 (182 aa).

2 disordered regions span residues 1–67 (MAAE…RSVT) and 100–182 (WKSN…KKKK). The span at 23–32 (SDEEDNIEPE) shows a compositional bias: acidic residues. Positions 50-63 (NKAEKRLPGPDELF) are enriched in basic and acidic residues. Position 67 is a phosphothreonine (Thr-67). Tyr-132 carries the post-translational modification Phosphotyrosine. Over residues 151 to 162 (EGEETLESDDEK) the composition is skewed to acidic residues. Ser-158 is subject to Phosphoserine. Residues 172–182 (VEPGEPAKKKK) are compositionally biased toward basic and acidic residues.

This sequence belongs to the UPF0690 family. In terms of tissue distribution, expressed in all tissues tested including heart, placenta, liver, skeletal muscle, kidney and pancreas. Weak expression in brain and lung.

The chain is UPF0690 protein C1orf52 (C1orf52) from Homo sapiens (Human).